A 104-amino-acid chain; its full sequence is Vegetative-specific protein H7 (104 aa).

The 55-residue stretch at 43 to 97 folds into the HTH cro/C1-type domain; sequence IQRARNALKMTQKELAFKINERPGVINEYESGSAIPSQAVLSKLEKALNVKLRGK. The segment at residues 54–73 is a DNA-binding region (H-T-H motif); the sequence is QKELAFKINERPGVINEYES.

This chain is Vegetative-specific protein H7 (cinD-1), found in Dictyostelium discoideum (Social amoeba).